The chain runs to 213 residues: MKPEETGGSVYQPLDESRHVQRGVLQALGAIQILNGILILALGIFLVCLQHVSHHFRHFFFFTFYTGYPLWGAVFFISSGSLTVAAGRNPTRMLMQNSFGINIASTTIAFVGTVFLSVHLAFNTQAFKGCQSSPSPDVCISLGSSSDGLVSLMLILTLLELSVTISISAMWCLGNVCGLREAITSPPNSVESGILPEGSDSENLNTQPQASEE.

Over 1–26 the chain is Cytoplasmic; sequence MKPEETGGSVYQPLDESRHVQRGVLQ. Residues 27-47 form a helical membrane-spanning segment; that stretch reads ALGAIQILNGILILALGIFLV. Topologically, residues 48–58 are extracellular; the sequence is CLQHVSHHFRH. Residues 59-79 form a helical membrane-spanning segment; it reads FFFFTFYTGYPLWGAVFFISS. The Cytoplasmic portion of the chain corresponds to 80-97; it reads GSLTVAAGRNPTRMLMQN. The helical transmembrane segment at 98-118 threads the bilayer; the sequence is SFGINIASTTIAFVGTVFLSV. Over 119-148 the chain is Extracellular; sequence HLAFNTQAFKGCQSSPSPDVCISLGSSSDG. The chain crosses the membrane as a helical span at residues 149–169; it reads LVSLMLILTLLELSVTISISA. The Cytoplasmic segment spans residues 170 to 213; sequence MWCLGNVCGLREAITSPPNSVESGILPEGSDSENLNTQPQASEE. Positions 189-213 are disordered; sequence SVESGILPEGSDSENLNTQPQASEE. Over residues 201–213 the composition is skewed to polar residues; it reads SENLNTQPQASEE.

The protein belongs to the MS4A family. As to quaternary structure, interacts with CDKN3. Interacts with CDKN3-CDK2 complexes through its binding to CDKN3; this interaction facilitates dissociation of cyclin A from CDKN3-CDK2 complexes. Expressed at low levels only in specific immune tissues, such as, spleen, bone marrow and peripheral blood leukocytes.

It localises to the membrane. Hematopoietic modulator for the G1-S cell cycle transition. Modulates the level of phosphorylation of cyclin-dependent kinase 2 (CDK2) through its direct binding to cyclin-dependent kinase inhibitor 3 (CDKN3/KAP). This chain is Membrane-spanning 4-domains subfamily A member 3 (Ms4a3), found in Mus musculus (Mouse).